Reading from the N-terminus, the 192-residue chain is Anthrone oxygenase (192 aa).

A run of 3 helical transmembrane segments spans residues 12 to 32 (IVTG…TVPV), 54 to 74 (GHIS…YIAA), and 86 to 106 (AALV…VMSS). N-linked (GlcNAc...) asparagine glycosylation is found at N130, N138, and N147. A helical transmembrane segment spans residues 172–192 (MHLVRSLFPLMAAVLGVGICV).

Belongs to the anthrone oxygenase family.

It is found in the membrane. The catalysed reaction is emodin anthrone + O2 = emodin + H2O + H(+). It participates in secondary metabolite biosynthesis. Its function is as follows. Anthrone oxygenase; part of the gene cluster that mediates the biosynthesis of monodictyphenone, a prenyl xanthone derivative. The pathway begins with the synthesis of atrochrysone thioester by the polyketide synthase (PKS) mdpG. The atrochrysone carboxyl ACP thioesterase mdpF then breaks the thioester bond and releases the atrochrysone carboxylic acid from mdpG. The atrochrysone carboxylic acid is then converted to atrochrysone which is further transformed into emodin anthrone by mdpH-1 and mdpH-2. Emodin is further modified to yield monodictyphenone via several steps involving mdpB, mdpC mdpJ, mdpK and mdpL. These enzymes with xptA, xptB and xptC are also proposed to be involved in the synthesis of shamixanthone from emodin. Especially, direct reduction of emodin by the short chain dehydrogenase mdpC followed by dehydration catalyzed by the scytalone dehydratase-like protein mdpB gives loss of oxygen and formation of chrysophanol intermediate in two simple steps. This chain is Anthrone oxygenase, found in Emericella nidulans (strain FGSC A4 / ATCC 38163 / CBS 112.46 / NRRL 194 / M139) (Aspergillus nidulans).